A 479-amino-acid polypeptide reads, in one-letter code: Baeyer-Villiger monooxygenase AacuH (479 aa).

Residues Asp14 to Arg34 form a disordered region.

This sequence belongs to the AflY oxidoreductase family.

Its pathway is secondary metabolite biosynthesis. Its function is as follows. Baeyer-Villiger monooxygenase; part of the gene cluster that mediates the biosynthesis of the tetrahydroxanthone dimer secalonic acid D. The pathway begins with the synthesis of atrochrysone thioester by the polyketide synthase AacuL. The atrochrysone carboxyl ACP thioesterase AacuM then breaks the thioester bond and releases the atrochrysone carboxylic acid from AacuL. Atrochrysone carboxylic acid is decarboxylated by the decarboxylase AacuI, and oxidized by the anthrone oxygenase AacuG to yield emodin. Emodin is then reduced to emodin hydroquinone by a yet unidentified oxidoreductase. A-ring reduction by the short chain dehydrogenase AacuN, dehydration by the scytalone dehydratase-like protein AacuK and probable spontaneous re-oxidation, results in overall deoxygenation to chrysophanol. Baeyer-Villiger oxidation by the Baeyer-Villiger monooxygenase (BVMO) AacuH then yields monodictyphenone. Monodictyphenone is transformed into compounds with the tetrahydroxanthone skeleton via methylesterification by the methyltransferase AacuQ, followed by the action of the flavin-dependent monooxygenase AacuC, the isomerase AacuP, and the short chain dehydrogenase/reductase AacuF or AacuD. AacuF and AacuD should accept the same compound as a substrate but perform the ketoreduction with a different stereoselectivity, thus yielding blennolides B and A, respectively. In the final step of the biosynthesis, the cytochrome P450 monooxygenase AacuE accepts blennolide B and/or blennolide A to conduct the dimerization reaction to furnish the tetrahydroxanthone dimers, secalonic acids D, B, and F. This is Baeyer-Villiger monooxygenase AacuH from Aspergillus aculeatus (strain ATCC 16872 / CBS 172.66 / WB 5094).